Consider the following 397-residue polypeptide: MKFVDEATIIVEAGKGGHGCLSFRREKYVPKGGPDGGDGGDGGSVYLEADSALNTLIDYRFQRKYKAQNGEPGAGRNCTGTKGEDLVLPVPVGTTVVDMDTHEVLGDLTKEGQRLKVAQGGFHGLGNTRFKSSVNRAPRQTSKGSEGEARNLRLELKVLADVGLLGLPNAGKSTFIRSVSAARPKVADYPFTTLVPNLGVVSVQAHQSFVIADIPGLIEGAAEGAGLGIRFLKHLVRTRLLLHLVDVAPYDGSSPADAVRAIAHELEKFSETLASRPRWLVLNKVDMVAEEDREAHCQAIVDELGWEGPVFRISALSGEGTKPLVQAVMRWIEEQAEQEADNPDFAEQEAARRRRMDEEARQKIEADRQARRAARNADDDDDFDDDDYDVEVVYAPE.

One can recognise an Obg domain in the interval 1–159 (MKFVDEATII…RNLRLELKVL (159 aa)). A disordered region spans residues 128 to 148 (TRFKSSVNRAPRQTSKGSEGE). Positions 129–144 (RFKSSVNRAPRQTSKG) are enriched in polar residues. The 174-residue stretch at 160–333 (ADVGLLGLPN…LVQAVMRWIE (174 aa)) folds into the OBG-type G domain. GTP is bound by residues 166 to 173 (GLPNAGKS), 191 to 195 (FTTLV), 213 to 216 (DIPG), 283 to 286 (NKVD), and 314 to 316 (SAL). Residues Ser-173 and Thr-193 each contribute to the Mg(2+) site. The span at 336–347 (AEQEADNPDFAE) shows a compositional bias: acidic residues. The interval 336–397 (AEQEADNPDF…YDVEVVYAPE (62 aa)) is disordered. Positions 349–370 (EAARRRRMDEEARQKIEADRQA) are enriched in basic and acidic residues. The span at 378–390 (DDDDDFDDDDYDV) shows a compositional bias: acidic residues.

Belongs to the TRAFAC class OBG-HflX-like GTPase superfamily. OBG GTPase family. As to quaternary structure, monomer. The cofactor is Mg(2+).

The protein localises to the cytoplasm. An essential GTPase which binds GTP, GDP and possibly (p)ppGpp with moderate affinity, with high nucleotide exchange rates and a fairly low GTP hydrolysis rate. Plays a role in control of the cell cycle, stress response, ribosome biogenesis and in those bacteria that undergo differentiation, in morphogenesis control. This Marinobacter nauticus (strain ATCC 700491 / DSM 11845 / VT8) (Marinobacter aquaeolei) protein is GTPase Obg.